Here is a 269-residue protein sequence, read N- to C-terminus: Undecaprenyl-diphosphatase (269 aa).

7 helical membrane passes run 41-61 (FATM…VFHY), 78-98 (GFNL…IGLL), 107-127 (LFSP…MIVI), 148-167 (SLLI…SRSA), 184-204 (AEFS…LSLL), 213-233 (LEWQ…LFVV), and 248-268 (FAYY…EKIV).

Belongs to the UppP family.

The protein resides in the cell membrane. The enzyme catalyses di-trans,octa-cis-undecaprenyl diphosphate + H2O = di-trans,octa-cis-undecaprenyl phosphate + phosphate + H(+). Its function is as follows. Catalyzes the dephosphorylation of undecaprenyl diphosphate (UPP). Confers resistance to bacitracin. The protein is Undecaprenyl-diphosphatase of Thermoanaerobacter pseudethanolicus (strain ATCC 33223 / 39E) (Clostridium thermohydrosulfuricum).